A 251-amino-acid polypeptide reads, in one-letter code: MVEDSQETTHFGFQTVAKEQKQDMVAHVFHSVAAKYDVMNDLMSFGIHRLWKRFTIDCSGVRRGQTVLDLAGGTGDLTAKFSRLVGETGRVMLADINDSMLKMGREKLRNIGIVGNVEYVQANAEALPFADNTFDCITISFGLRNVTDKEKALRSMYRVLKPGGRLLVLEFSKPIIEPLSKAYDAYSFHILPKVGELVAKDGDSYRYLAESIRMHPDQETLKGMMQDAGFESVDYHNLTAGIVALHRGYKF.

S-adenosyl-L-methionine-binding positions include Thr-74, Asp-95, Asn-123–Ala-124, and Ser-140.

This sequence belongs to the class I-like SAM-binding methyltransferase superfamily. MenG/UbiE family.

It carries out the reaction a 2-demethylmenaquinol + S-adenosyl-L-methionine = a menaquinol + S-adenosyl-L-homocysteine + H(+). The enzyme catalyses a 2-methoxy-6-(all-trans-polyprenyl)benzene-1,4-diol + S-adenosyl-L-methionine = a 5-methoxy-2-methyl-3-(all-trans-polyprenyl)benzene-1,4-diol + S-adenosyl-L-homocysteine + H(+). The protein operates within quinol/quinone metabolism; menaquinone biosynthesis; menaquinol from 1,4-dihydroxy-2-naphthoate: step 2/2. Its pathway is cofactor biosynthesis; ubiquinone biosynthesis. Methyltransferase required for the conversion of demethylmenaquinol (DMKH2) to menaquinol (MKH2) and the conversion of 2-polyprenyl-6-methoxy-1,4-benzoquinol (DDMQH2) to 2-polyprenyl-3-methyl-6-methoxy-1,4-benzoquinol (DMQH2). The chain is Ubiquinone/menaquinone biosynthesis C-methyltransferase UbiE from Klebsiella pneumoniae (strain 342).